Consider the following 436-residue polypeptide: Testican-3 (436 aa).

The first 22 residues, 1–22 (MLKVSAVLCVCAAAWCSQSLAA), serve as a signal peptide directing secretion. 8 disulfides stabilise this stretch: cysteine 90–cysteine 101, cysteine 95–cysteine 111, cysteine 139–cysteine 169, cysteine 142–cysteine 162, cysteine 151–cysteine 183, cysteine 317–cysteine 341, cysteine 352–cysteine 359, and cysteine 361–cysteine 380. Residues 133–185 (GPILSTCKQCPVVYPSPVCGSDGHTYSFQCKLEYQACVLGKQISVKCEGHCPC) form the Kazal-like domain. Positions 314–380 (DPPCQTELSN…GSRINGVADC (67 aa)) constitute a Thyroglobulin type-1 domain. O-linked (Xyl...) (glycosaminoglycan) serine glycosylation is found at serine 387 and serine 392. Positions 393–436 (GDFHEWTDDEDDEDDIMNDEDEIEDDDEDEGDDDDGGDDHDGYI) are disordered. The segment covering 399-430 (TDDEDDEDDIMNDEDEIEDDDEDEGDDDDGGD) has biased composition (acidic residues).

In terms of processing, contains chondroitin sulfate and heparan sulfate O-linked oligosaccharides. In terms of tissue distribution, expressed in brain.

It localises to the secreted. It is found in the extracellular space. The protein localises to the extracellular matrix. May participate in diverse steps of neurogenesis. Inhibits the processing of pro-matrix metalloproteinase 2 (MMP-2) by MT1-MMP and MT3-MMP. May interfere with tumor invasion. This chain is Testican-3 (SPOCK3), found in Pongo abelii (Sumatran orangutan).